An 803-amino-acid chain; its full sequence is Ribonucleoside-diphosphate reductase large chain (803 aa).

In terms of domain architecture, ATP-cone spans 1 to 91 (MYVVNRKGEE…TSNLHKNTSS (91 aa)). ATP-binding positions include 5 to 6 (NR), 11 to 17 (EPVSFDQ), Thr-52, and Asp-56. Ser-215 is a binding site for GDP. Cys-216 and Cys-442 form a disulfide bridge. DTTP contacts are provided by residues 224–226 (DSI), Lys-241, Arg-254, and 261–262 (RG). Asn-425 lines the GDP pocket. Asn-425 functions as the Proton acceptor in the catalytic mechanism. Cys-427 (cysteine radical intermediate) is an active-site residue. GDP contacts are provided by residues Glu-429 and 604–607 (TAST). Glu-429 acts as the Proton acceptor in catalysis.

It belongs to the ribonucleoside diphosphate reductase large chain family. Heterodimer of a large and a small subunit.

It carries out the reaction a 2'-deoxyribonucleoside 5'-diphosphate + [thioredoxin]-disulfide + H2O = a ribonucleoside 5'-diphosphate + [thioredoxin]-dithiol. Its activity is regulated as follows. Under complex allosteric control mediated by deoxynucleoside triphosphates and ATP binding to separate specificity and activation sites on the large subunit. The type of nucleotide bound at the specificity site determines substrate preference. It seems probable that ATP makes the enzyme reduce CDP and UDP, dGTP favors ADP reduction and dTTP favors GDP reduction. Stimulated by ATP and inhibited by dATP binding to the activity site. In terms of biological role, provides the precursors necessary for DNA synthesis. Catalyzes the biosynthesis of deoxyribonucleotides from the corresponding ribonucleotides. This is Ribonucleoside-diphosphate reductase large chain (RNR1) from Cryptosporidium parvum.